The sequence spans 383 residues: MLYSPRLTDQILIVAGEASADLHAARTLHELQRLRPGITAFGVGGPRLREAGLEALAPAEDISVMGLAEVLPRIPRILGILRMLGRAAAERRPRAALLVDLPDFNLRLAARLKKLGIPVVYYVSPTIWAWRQGRAKKIARVVDRMLCILPFEERFYEGTGVSARFVGHPFAERPPPGPAEAYRSALGLPASRTTIAMVPGSRPSELKRLLPPMLQAAERLRAAHPDAQFVVPVAPTLDRAALEPYLAAHRTLEVRLVDGRTEEVVGASDAALVKSGTSTLEAGLMLRPMVVVYKLSWLSYAVARMLVKIAHVALVNILAGRGIVPELLQGDASPERMAAEVERLLGDRAAREAQIAALREVRASLGEPGAPLRVAEEVLGVMR.

This sequence belongs to the LpxB family.

The catalysed reaction is a lipid X + a UDP-2-N,3-O-bis[(3R)-3-hydroxyacyl]-alpha-D-glucosamine = a lipid A disaccharide + UDP + H(+). The protein operates within bacterial outer membrane biogenesis; LPS lipid A biosynthesis. Functionally, condensation of UDP-2,3-diacylglucosamine and 2,3-diacylglucosamine-1-phosphate to form lipid A disaccharide, a precursor of lipid A, a phosphorylated glycolipid that anchors the lipopolysaccharide to the outer membrane of the cell. This chain is Lipid-A-disaccharide synthase, found in Anaeromyxobacter dehalogenans (strain 2CP-1 / ATCC BAA-258).